The chain runs to 547 residues: MGSIPSEKETIFRSKLPDIYVPDHLPLHSYCFQNLHQFSDRPCLIDGFTNKTLTYAEVELASKRVGAGLHRLGLRQGHVVMLLLPNSIEFVLSFIGASLLGAMSTTANPFYTSAEIHKQAAAAGAKIIVTESCHVSKLQGLEGISRIVVIDDAVRVPENVMHFSELESTDEAELPRIDVHPDDVVALPYSSGTTGLPKGVMLTHNGLVTSVAQQVDGENPNLHFSEDDVLLCVLPLFHIYSLNSVLLCGLRAGAAIVLMRKFEIVRLMELVEKYRVTIAPFVPPIVVEMVKNEAVDRYDLSSIRVVMSGAAPMGKELENKLREKLPNAKLGQGYGMTEAGPVLSMCLAFAKEPFEVKSGSCGTVVRNAELKIIDPETGFSLSRNQPGEICIRGNQIMKGYLNNPEATKQTIDEEGWLHTGDIGFVDDDDEIFIVDRLKELIKYKGFQVAPAELEAMLITHPNMADAAVVSIKDDSCGELPVAFIVRSNGSEITEDEIKKYISKQVVFYKRIHRVFFIEAIPKAPSGKILRKELRARLAAECPNGRQL.

ATP-binding positions include 190–194, His-238, 310–312, 332–333, Thr-337, Asp-421, Arg-436, and Lys-527; these read SSGTT, AAP, and QG. Positions 263 to 332 are SBD1; it reads EIVRLMELVE…EKLPNAKLGQ (70 aa). The segment at 333–400 is SBD2; sequence GYGMTEAGPV…IRGNQIMKGY (68 aa).

It belongs to the ATP-dependent AMP-binding enzyme family. In terms of tissue distribution, mostly expressed in stems, and, to a lower extent, in bulbs.

It carries out the reaction (E)-4-coumarate + ATP + CoA = (E)-4-coumaroyl-CoA + AMP + diphosphate. Its pathway is phytoalexin biosynthesis; 3,4',5-trihydroxystilbene biosynthesis; 3,4',5-trihydroxystilbene from trans-4-coumarate: step 1/2. In terms of biological role, produces CoA thioesters of a variety of hydroxy- and methoxy-substituted cinnamic acids, which are used to synthesize several phenylpropanoid-derived compounds, including anthocyanins, flavonoids, isoflavonoids, coumarins, lignin, suberin and wall-bound phenolics. The chain is 4-coumarate-CoA ligase 1 from Narcissus pseudonarcissus (Daffodil).